A 150-amino-acid polypeptide reads, in one-letter code: UPF0208 membrane protein VP2081 (150 aa).

Helical transmembrane passes span 42 to 62 (FGIK…MAFN) and 70 to 90 (SIVV…WLGA).

This sequence belongs to the UPF0208 family.

The protein localises to the cell inner membrane. The polypeptide is UPF0208 membrane protein VP2081 (Vibrio parahaemolyticus serotype O3:K6 (strain RIMD 2210633)).